Here is a 292-residue protein sequence, read N- to C-terminus: 4-hydroxy-tetrahydrodipicolinate synthase (292 aa).

Pyruvate is bound at residue Thr45. Catalysis depends on Tyr133, which acts as the Proton donor/acceptor. Lys161 acts as the Schiff-base intermediate with substrate in catalysis. Ile203 serves as a coordination point for pyruvate.

Belongs to the DapA family. As to quaternary structure, homodimer.

The protein resides in the cytoplasm. It carries out the reaction L-aspartate 4-semialdehyde + pyruvate = (2S,4S)-4-hydroxy-2,3,4,5-tetrahydrodipicolinate + H2O + H(+). It functions in the pathway amino-acid biosynthesis; L-lysine biosynthesis via DAP pathway; (S)-tetrahydrodipicolinate from L-aspartate: step 3/4. Functionally, catalyzes the condensation of (S)-aspartate-beta-semialdehyde [(S)-ASA] and pyruvate to 4-hydroxy-tetrahydrodipicolinate (HTPA). The chain is 4-hydroxy-tetrahydrodipicolinate synthase from Pseudomonas aeruginosa (strain ATCC 15692 / DSM 22644 / CIP 104116 / JCM 14847 / LMG 12228 / 1C / PRS 101 / PAO1).